Reading from the N-terminus, the 260-residue chain is Ribonuclease 3 (260 aa).

The RNase III domain maps to 16–145 (VQLLESRLGL…VFGAVFLTSG (130 aa)). Glu58 is a Mg(2+) binding site. Residue Asp62 is part of the active site. Residues Asp131 and Glu134 each coordinate Mg(2+). Residue Glu134 is part of the active site. The DRBM domain occupies 172–241 (DYKTLLQEMA…AQATLEKLRE (70 aa)). Residues 219 to 260 (ATGRSKKEAEQSAAQATLEKLREDAACPTSPPPGTPRHDTPA) form a disordered region.

This sequence belongs to the ribonuclease III family. Homodimer. The cofactor is Mg(2+).

It is found in the cytoplasm. It carries out the reaction Endonucleolytic cleavage to 5'-phosphomonoester.. Digests double-stranded RNA. Involved in the processing of primary rRNA transcript to yield the immediate precursors to the large and small rRNAs (23S and 16S). Processes some mRNAs, and tRNAs when they are encoded in the rRNA operon. Processes pre-crRNA and tracrRNA of type II CRISPR loci if present in the organism. In Myxococcus xanthus (strain DK1622), this protein is Ribonuclease 3.